Reading from the N-terminus, the 137-residue chain is Large ribosomal subunit protein uL16 (137 aa).

Belongs to the universal ribosomal protein uL16 family. As to quaternary structure, part of the 50S ribosomal subunit.

Functionally, binds 23S rRNA and is also seen to make contacts with the A and possibly P site tRNAs. In Endomicrobium trichonymphae, this protein is Large ribosomal subunit protein uL16.